Consider the following 332-residue polypeptide: MAAVFLVTLYEYSPLFYIAVVFTCFIVTTGLVLGWFGWDVPVILRNSEETQFSTRVFKKQMRQVKNPFGLEITNPSSASITTGITLTTDCLEDSLLTCYWGCSVQKLYEALQKHVYCFRISTPQALEDALYSEYLYQEQYFIKKDSKEEIYCQLPRDTKIEDFGTVPRSRYPLVALLTLADEDDREIYDIISMVSVIHIPDRTYKLSCRILYQYLLLAQGQFHDLKQLFMSANNNFTPSNNSSSEEKNTDRSLLEKVGLSESEVEPSEENSKDCVVCQNGTVNWVLLPCRHTCLCDGCVKYFQQCPMCRQFVQESFALCSQKEQDKDKPKTL.

The RING-type zinc finger occupies 274–309 (CVVCQNGTVNWVLLPCRHTCLCDGCVKYFQQCPMCR).

Ubiquitously expressed with high expression in testis and the cerebellum.

Its subcellular location is the nucleus. The protein resides in the endoplasmic reticulum. Able to inhibit growth in several cell lines. This Homo sapiens (Human) protein is Cell growth regulator with RING finger domain protein 1 (CGRRF1).